Reading from the N-terminus, the 382-residue chain is Acetylornithine deacetylase (382 aa).

Histidine 79 serves as a coordination point for Zn(2+). Aspartate 81 is a catalytic residue. Aspartate 111 contributes to the Zn(2+) binding site. Glutamate 143 is a catalytic residue. Positions 144, 168, and 354 each coordinate Zn(2+).

This sequence belongs to the peptidase M20A family. ArgE subfamily. Homodimer. Zn(2+) is required as a cofactor. It depends on Co(2+) as a cofactor. Requires glutathione as cofactor.

The protein resides in the cytoplasm. The enzyme catalyses N(2)-acetyl-L-ornithine + H2O = L-ornithine + acetate. Its pathway is amino-acid biosynthesis; L-arginine biosynthesis; L-ornithine from N(2)-acetyl-L-ornithine (linear): step 1/1. In terms of biological role, catalyzes the hydrolysis of the amide bond of N(2)-acetylated L-amino acids. Cleaves the acetyl group from N-acetyl-L-ornithine to form L-ornithine, an intermediate in L-arginine biosynthesis pathway, and a branchpoint in the synthesis of polyamines. This Pasteurella multocida (strain Pm70) protein is Acetylornithine deacetylase.